The following is a 766-amino-acid chain: MVANSTGRDASALKSRKRAADSESEPLLKQGQPFPKQPRIGSELDKTRWRLKDDDSRHTWHYLEDDDAAKEWPQSYAEKWYLNQSLDLPDLPSPDSPLAAATNGLDFFEKLQLPSGHWGCEYGGPMFLLPSVVITWYVTRTPISPSKATAIYNYISARAHPEDGGWGLHIEGESSVFGTLMNYVALRLVGVEADDPVLVKARGTLHKMGGALYAPHWAKFWMGVLGVMDWDVVNPVPPEIWLLPDWVPFAPWRWWIHIRMVFLPMGWLYSKRWSCEETDVIRSLRKEVFIEDYAKIKWTSHRNDIGVVDNYHPKSWLLNTANWLIVNIWNPYLRPNVLKEKAEAWSSKQVDMEDANTDYACLAPVNATMNTVMCYARDGPDNYGVQRHIERLEEFLWVKDEGMLVNGTNGVQCWDTAFLIQAVFEAGLHKDEKWKPMLMKSLQYLERQQIREDCVDQDVCYRQPRKGGWPFSNKDQGYGVSDCISEAMKAIILLQKVGGLPEVLEERRLFDAVDTLLLYQNSNGGMSSYEKRRGGEWLEMLNAAEVFGRIMIEYDYPECTTACVTALSLFNKYWPDYRTKEVKTLIRTAAEWIKSNQRPDGGWYGSWGICFTYAGMFALESMKHIGQTYATGENSRRGCDFLISKQRADGGWSESYKACETMEYVEHPSGSLVVQTAWALIGLMEADYPHVEPLKRGIQLIMDRQQPNGEWLQEAIEGVFNKSCMISYPNYKFTFTIKALGMFAKRFPEEKLVPSWALQGNGIEKS.

A disordered region spans residues 1-47 (MVANSTGRDASALKSRKRAADSESEPLLKQGQPFPKQPRIGSELDKT). A PFTB 1 repeat occupies 148 to 190 (ATAIYNYISARAHPEDGGWGLHIEGESSVFGTLMNYVALRLVG). D482 serves as the catalytic Proton donor. PFTB repeat units follow at residues 586–626 (IRTA…KHIG) and 635–676 (SRRG…VVQT).

It belongs to the terpene cyclase/mutase family.

The protein resides in the lipid droplet. It is found in the endoplasmic reticulum membrane. It catalyses the reaction (S)-2,3-epoxysqualene = lanosterol. It functions in the pathway terpene metabolism; lanosterol biosynthesis; lanosterol from farnesyl diphosphate: step 3/3. The protein operates within steroid metabolism; ergosterol biosynthesis. Functionally, lanosterol synthase; part of the third module of ergosterol biosynthesis pathway that includes the late steps of the pathway. ERG7 catalyzes the cyclization of (S)-2,3 oxidosqualene to lanosterol, a reaction that forms the sterol core. The third module or late pathway involves the ergosterol synthesis itself through consecutive reactions that mainly occur in the endoplasmic reticulum (ER) membrane. Firstly, the squalene synthase ERG9 catalyzes the condensation of 2 farnesyl pyrophosphate moieties to form squalene, which is the precursor of all steroids. Squalene synthase is crucial for balancing the incorporation of farnesyl diphosphate (FPP) into sterol and nonsterol isoprene synthesis. Secondly, squalene is converted into lanosterol by the consecutive action of the squalene epoxidase ERG1 and the lanosterol synthase ERG7. Then, the delta(24)-sterol C-methyltransferase ERG6 methylates lanosterol at C-24 to produce eburicol. Eburicol is the substrate of the sterol 14-alpha demethylase encoded by CYP51A, CYP51B and CYP51C, to yield 4,4,24-trimethyl ergosta-8,14,24(28)-trienol. CYP51B encodes the enzyme primarily responsible for sterol 14-alpha-demethylation, and plays an essential role in ascospore formation. CYP51A encodes an additional sterol 14-alpha-demethylase, induced on ergosterol depletion and responsible for the intrinsic variation in azole sensitivity. The third CYP51 isoform, CYP51C, does not encode a sterol 14-alpha-demethylase, but is required for full virulence on host wheat ears. The C-14 reductase ERG24 then reduces the C14=C15 double bond which leads to 4,4-dimethylfecosterol. A sequence of further demethylations at C-4, involving the C-4 demethylation complex containing the C-4 methylsterol oxidases ERG25, the sterol-4-alpha-carboxylate 3-dehydrogenase ERG26 and the 3-keto-steroid reductase ERG27, leads to the production of fecosterol via 4-methylfecosterol. ERG28 has a role as a scaffold to help anchor ERG25, ERG26 and ERG27 to the endoplasmic reticulum. The C-8 sterol isomerase ERG2 then catalyzes the reaction which results in unsaturation at C-7 in the B ring of sterols and thus converts fecosterol to episterol. The sterol-C5-desaturases ERG3A and ERG3BB then catalyze the introduction of a C-5 double bond in the B ring to produce 5-dehydroepisterol. The C-22 sterol desaturases ERG5A and ERG5B further convert 5-dehydroepisterol into ergosta-5,7,22,24(28)-tetraen-3beta-ol by forming the C-22(23) double bond in the sterol side chain. Finally, ergosta-5,7,22,24(28)-tetraen-3beta-ol is substrate of the C-24(28) sterol reductase ERG4 to produce ergosterol. The chain is Lanosterol synthase ERG7 from Gibberella zeae (strain ATCC MYA-4620 / CBS 123657 / FGSC 9075 / NRRL 31084 / PH-1) (Wheat head blight fungus).